The chain runs to 322 residues: Putative integrase ORF3 (322 aa).

In terms of domain architecture, Integrase catalytic spans Arg-153–Ile-322.

It belongs to the plectrovirus integrase ORF3 family.

Its function is as follows. This protein may encode an integrase, which is necessary for integration of the viral DNA into host genome. The polypeptide is Putative integrase ORF3 (Spiroplasma virus SpV1-R8A2 B (SpV1)).